Here is a 303-residue protein sequence, read N- to C-terminus: Coenzyme PQQ synthesis protein B (303 aa).

The protein belongs to the PqqB family.

It participates in cofactor biosynthesis; pyrroloquinoline quinone biosynthesis. Functionally, may be involved in the transport of PQQ or its precursor to the periplasm. The sequence is that of Coenzyme PQQ synthesis protein B from Acinetobacter baumannii (strain AB0057).